Reading from the N-terminus, the 124-residue chain is Ribonuclease pancreatic (124 aa).

Basic and acidic residues predominate over residues 1-13 (KESAAAKFERQHM). The disordered stretch occupies residues 1–25 (KESAAAKFERQHMDPSPSSASSSNY). Substrate-binding residues include K7 and R10. H12 (proton acceptor) is an active-site residue. 4 disulfides stabilise this stretch: C26/C84, C40/C95, C58/C110, and C65/C72. An N-linked (GlcNAc...) asparagine; partial glycan is attached at N34. Substrate-binding positions include 41 to 45 (KPVNT), K66, and R85. The active-site Proton donor is H119.

The protein belongs to the pancreatic ribonuclease family. In terms of assembly, monomer. Interacts with and forms tight 1:1 complexes with RNH1. Dimerization of two such complexes may occur. Interaction with RNH1 inhibits this protein. In terms of tissue distribution, pancreas.

It localises to the secreted. It carries out the reaction an [RNA] containing cytidine + H2O = an [RNA]-3'-cytidine-3'-phosphate + a 5'-hydroxy-ribonucleotide-3'-[RNA].. The catalysed reaction is an [RNA] containing uridine + H2O = an [RNA]-3'-uridine-3'-phosphate + a 5'-hydroxy-ribonucleotide-3'-[RNA].. Functionally, endonuclease that catalyzes the cleavage of RNA on the 3' side of pyrimidine nucleotides. Acts on single-stranded and double-stranded RNA. This chain is Ribonuclease pancreatic (RNASE1), found in Capreolus capreolus (European roe deer).